A 112-amino-acid polypeptide reads, in one-letter code: Iron-sulfur cluster assembly protein CyaY (112 aa).

Belongs to the frataxin family.

Its function is as follows. Involved in iron-sulfur (Fe-S) cluster assembly. May act as a regulator of Fe-S biogenesis. The polypeptide is Iron-sulfur cluster assembly protein CyaY (Delftia acidovorans (strain DSM 14801 / SPH-1)).